The primary structure comprises 1212 residues: Histone demethylase UTY (1212 aa).

8 TPR repeats span residues 88–121 (SDFF…QTDY), 125–158 (AAFL…DPNF), 165–193 (HLRL…IDCN), 200–233 (VEIQ…ESLP), 245–278 (GWMH…DPNS), 279–312 (GQSW…SEAS), 313–346 (ADTW…DHGH), and 347–380 (AAAW…KSCN). Residues 530 to 539 (FTKESKDSRS) show a composition bias toward basic and acidic residues. Residues 530 to 555 (FTKESKDSRSKSLTSKTSRKDRDTSN) form a disordered region. T752 bears the Phosphothreonine mark. The segment at 865-886 (RRTQVKDYSDNESTCSDNSGRR) is disordered. Residues 907–1070 (KWKLQLHELT…YKLAVERYEW (164 aa)) enclose the JmjC domain. Fe cation contacts are provided by H958, E960, and H1038. Zn(2+)-binding residues include C1143, C1146, C1170, and C1173.

This sequence belongs to the UTX family. In terms of assembly, binds TLE1 and TLE2. Requires L-ascorbate as cofactor. Fe(2+) serves as cofactor.

The protein resides in the nucleus. It catalyses the reaction N(6),N(6),N(6)-trimethyl-L-lysyl(27)-[histone H3] + 2 2-oxoglutarate + 2 O2 = N(6)-methyl-L-lysyl(27)-[histone H3] + 2 formaldehyde + 2 succinate + 2 CO2. In terms of biological role, male-specific histone demethylase that catalyzes trimethylated 'Lys-27' (H3K27me3) demethylation in histone H3. Has relatively low KDM activity. This Mus musculus (Mouse) protein is Histone demethylase UTY (Uty).